A 167-amino-acid polypeptide reads, in one-letter code: U-scoloptoxin(08)-Er5b (167 aa).

The first 22 residues, Met1–Gly22, serve as a signal peptide directing secretion. The propeptide occupies Glu23–Arg94. RLWRNWE repeat units lie at residues Arg34–Glu40, Arg61–Glu67, and Arg86–Glu92. Residue Gln95 is modified to Pyrrolidone carboxylic acid. Residues Glu107–Glu113 form an RLWRNWE 4; approximate repeat. Residues Trp112–Arg118 constitute a propeptide that is removed on maturation. Gln119 bears the Pyrrolidone carboxylic acid mark. An RLWRNWE 5 repeat occupies Arg134–Glu140. Positions Trp139 to Glu167 are excised as a propeptide. Positions Arg147 to Glu167 are disordered.

The protein belongs to the scoloptoxin-08 family. In terms of tissue distribution, expressed by the venom gland.

The protein resides in the secreted. This is U-scoloptoxin(08)-Er5b from Ethmostigmus rubripes (Giant centipede).